The chain runs to 422 residues: MSRLLCPSSSTSVVRRARPTFVLGNLSIKQAQGTGASSALARRRRSTFAATADGLHVIPLEQKYPFPWLRDACRCPDCVHPSTRQKLFCTSDIPVDIQPATNGVEEVGEGVKIRWSNGHESLYDWDFLKEHSSSVSRSEANKDLPRVGWTRASIAKERDLYLEYEELKTKEGLRKAIDHTCRFGLLFIRNVPNVETSTASCSLRTLAHYFGDIRTTFYGELWDVKNVSNSRNIAYTNLGLGLHMDLLYFQHPPQFQFLHCLRNRVQGGSSIFSDALHAAETLRIQDAASYSVLTDVQVPFFYVNDGHHLYHTHPTIEVSASGDVNQINYSPPFQAPLLLDTPPAFFTALHQFSNLVNSDENTYEYTLEEGDAVLFDNRRVLHARRAFEEIPGQGVRVGEANRWLKGCYIEGDTMWDRGRMLR.

Residues Cys-73, Cys-75, Cys-78, and His-119 each coordinate Zn(2+). 3 residues coordinate Fe cation: His-243, Asp-245, and His-382.

It belongs to the gamma-BBH/TMLD family. Fe(2+) is required as a cofactor.

It functions in the pathway mycotoxin biosynthesis. Its function is as follows. Dioxygenase; part of the gene cluster that mediates the biosynthesis of strobilurin A, an antifungal polyketide that contains a key beta-methoxyacrylate toxophore that targets the complex III of the mitochondrial electron transport chain. Strobilurin biosynthesis begins with construction of benzoyl CoA by step-wise elimination of ammonia from phenylalanine by the phenylalanine ammonia-lyase str11, oxygenation by str8 and retro-Claisen reaction to form benzoic acid, which is activated to its CoA thiolester benzoyl CoA by the dedicated CoA ligase str10. Benzoyl CoA forms the starter unit for the highly reducing polyketide synthase stpks1 that produces the polyketide prestrobilutin A. The FAD-dependent oxygenase str9 then catalyzes the key oxidative rearrangement responsible for the creation of the beta-methoxyacrylate toxophore. Str9 performs epoxidation of the 2,3 olefin of prestrobilutin A, followed by Meinwald rearrangement to furnish the aldehyde intermediate. Rapid enolization of the aldehyde intermediate would give the beta-methoxyacrylate skeleton and methylations catalyzed by str2 and str3 complete the synthesis and lead to the production of strobilurin A. The short-chain dehydrogenase stl2 and the dehydrogenase str4 play a role in the shunt pathway leading to the production of bolineol. The cluster encodes no obvious halogenase gene that could be involved in production of strobilurin B, nor any obvious dimethylallyl-transferase that could be involved in the production of strobilurin G. It is possible that unknown proteins encoded in, or near, the cluster (such as str1 or stl1) may form new classes of halogenases or dimethylally-transferases, or that the responsible genes are located elsewhere on the genome. Similarly, proteins encoded by str5/str6 hydrolases appear to have no chemical role in the biosynthesis of strobilurin A. Finally, no obvious self-resistance gene is found within the cluster. The sequence is that of Dioxygenase str8 from Strobilurus tenacellus.